Here is a 669-residue protein sequence, read N- to C-terminus: DNA ligase (669 aa).

NAD(+) is bound by residues Asp34 to Asp38, Ser83 to Leu84, and Glu114. Residue Lys116 is the N6-AMP-lysine intermediate of the active site. The NAD(+) site is built by Arg137, Glu171, Lys287, and Lys311. Cys405, Cys408, Cys423, and Cys428 together coordinate Zn(2+). Residues Asn591 to Lys669 form the BRCT domain.

The protein belongs to the NAD-dependent DNA ligase family. LigA subfamily. Requires Mg(2+) as cofactor. The cofactor is Mn(2+).

The catalysed reaction is NAD(+) + (deoxyribonucleotide)n-3'-hydroxyl + 5'-phospho-(deoxyribonucleotide)m = (deoxyribonucleotide)n+m + AMP + beta-nicotinamide D-nucleotide.. Its function is as follows. DNA ligase that catalyzes the formation of phosphodiester linkages between 5'-phosphoryl and 3'-hydroxyl groups in double-stranded DNA using NAD as a coenzyme and as the energy source for the reaction. It is essential for DNA replication and repair of damaged DNA. The polypeptide is DNA ligase (Bacillus cereus (strain ZK / E33L)).